A 378-amino-acid chain; its full sequence is MAAKKDKSVPDSKITDKEGKEKAVKDAMAAITKGFGSGLIMKLGEKSSMNVESIPTGSINLDIALGIGGVPKGRIIEIYGAESSGKTTLALHVIAEAQKQGGTVAFIDAEHALDPVYAKALGVDIDELLISQPDYGEQALEIADTLVRSGAIDLIVIDSVAALVPKAEIDGEMSDQQMGLQARLMSKGLRKLTGNLNKYKTTMIFINQIREKIGVTYGPTTTTTGGKALKFYSSVRMEVKKMGTVKQGDDPIGSEVIVKVTKNKVAPPFKEAAFEILYGKGISKVGEIIDAAVAKDVIVKAGSWFSFRDQSIGQGKEKVRAELEINPELLAQVEKDLKEAIAKGPVDKKKKKSKKEASSDDTDDENLEIDDAIDENND.

The tract at residues 1–20 is disordered; sequence MAAKKDKSVPDSKITDKEGK. Residue 80-87 participates in ATP binding; the sequence is GAESSGKT. The tract at residues 344–378 is disordered; that stretch reads GPVDKKKKKSKKEASSDDTDDENLEIDDAIDENND. Residues 359–378 show a composition bias toward acidic residues; that stretch reads SDDTDDENLEIDDAIDENND.

It belongs to the RecA family.

Its subcellular location is the cytoplasm. Its function is as follows. Can catalyze the hydrolysis of ATP in the presence of single-stranded DNA, the ATP-dependent uptake of single-stranded DNA by duplex DNA, and the ATP-dependent hybridization of homologous single-stranded DNAs. It interacts with LexA causing its activation and leading to its autocatalytic cleavage. The protein is Protein RecA of Fusobacterium nucleatum subsp. nucleatum (strain ATCC 25586 / DSM 15643 / BCRC 10681 / CIP 101130 / JCM 8532 / KCTC 2640 / LMG 13131 / VPI 4355).